Reading from the N-terminus, the 324-residue chain is Biotin synthase (324 aa).

Residues 50-278 (HAGPAFTCAI…QADILVAGGR (229 aa)) form the Radical SAM core domain. [4Fe-4S] cluster-binding residues include Cys-67, Cys-71, and Cys-74. Cys-143 and Cys-203 together coordinate [2Fe-2S] cluster.

The protein belongs to the radical SAM superfamily. Biotin synthase family. In terms of assembly, homodimer. The cofactor is [4Fe-4S] cluster. It depends on [2Fe-2S] cluster as a cofactor.

It catalyses the reaction (4R,5S)-dethiobiotin + (sulfur carrier)-SH + 2 reduced [2Fe-2S]-[ferredoxin] + 2 S-adenosyl-L-methionine = (sulfur carrier)-H + biotin + 2 5'-deoxyadenosine + 2 L-methionine + 2 oxidized [2Fe-2S]-[ferredoxin]. Its pathway is cofactor biosynthesis; biotin biosynthesis; biotin from 7,8-diaminononanoate: step 2/2. In terms of biological role, catalyzes the conversion of dethiobiotin (DTB) to biotin by the insertion of a sulfur atom into dethiobiotin via a radical-based mechanism. The polypeptide is Biotin synthase (Oleidesulfovibrio alaskensis (strain ATCC BAA-1058 / DSM 17464 / G20) (Desulfovibrio alaskensis)).